Here is a 293-residue protein sequence, read N- to C-terminus: NAD-dependent protein deacetylase (293 aa).

The 278-residue stretch at 5 to 282 (PAHDHHTLQD…LHAPPHLPRA (278 aa)) folds into the Deacetylase sirtuin-type domain. NAD(+) is bound by residues 27 to 47 (GAGC…GGWK) and 105 to 108 (QNVD). His-123 (proton acceptor) is an active-site residue. Positions 131, 134, 182, and 185 each coordinate Zn(2+). Residues 222 to 224 (GSS), 248 to 250 (NFG), and Cys-266 contribute to the NAD(+) site.

This sequence belongs to the sirtuin family. Class II subfamily. Requires Zn(2+) as cofactor.

It is found in the cytoplasm. It carries out the reaction N(6)-acetyl-L-lysyl-[protein] + NAD(+) + H2O = 2''-O-acetyl-ADP-D-ribose + nicotinamide + L-lysyl-[protein]. In terms of biological role, NAD-dependent protein deacetylase which modulates the activities of several enzymes which are inactive in their acetylated form. In Xanthomonas axonopodis pv. citri (strain 306), this protein is NAD-dependent protein deacetylase.